The primary structure comprises 298 residues: NAD kinase (298 aa).

The Proton acceptor role is filled by D80. Residues 80 to 81, 154 to 155, R182, D184, 195 to 200, A219, and Q253 each bind NAD(+); these read DG, ND, and TAYALS.

It belongs to the NAD kinase family. A divalent metal cation is required as a cofactor.

It is found in the cytoplasm. It catalyses the reaction NAD(+) + ATP = ADP + NADP(+) + H(+). Its function is as follows. Involved in the regulation of the intracellular balance of NAD and NADP, and is a key enzyme in the biosynthesis of NADP. Catalyzes specifically the phosphorylation on 2'-hydroxyl of the adenosine moiety of NAD to yield NADP. The polypeptide is NAD kinase (Acidovorax sp. (strain JS42)).